Reading from the N-terminus, the 509-residue chain is Anaerobic nitric oxide reductase transcription regulator NorR (509 aa).

A 4-aspartylphosphate modification is found at aspartate 56. The Sigma-54 factor interaction domain occupies methionine 186–valine 415. Residues glycine 214–glutamate 221 and alanine 277–glutamate 286 contribute to the ATP site. Positions tryptophan 484–arginine 503 form a DNA-binding region, H-T-H motif.

Its pathway is nitrogen metabolism; nitric oxide reduction. Functionally, required for the expression of anaerobic nitric oxide (NO) reductase, acts as a transcriptional activator for at least the norVW operon. Activation also requires sigma-54. The polypeptide is Anaerobic nitric oxide reductase transcription regulator NorR (Aeromonas salmonicida (strain A449)).